Consider the following 141-residue polypeptide: Hemoglobin subunit alpha (141 aa).

In terms of domain architecture, Globin spans 1-141 (VLSAKDKTNI…VSTVLTSKYR (141 aa)). Position 3 is a phosphoserine (S3). K7 carries the N6-succinyllysine modification. At T8 the chain carries Phosphothreonine. K16 carries the N6-acetyllysine; alternate modification. N6-succinyllysine; alternate is present on K16. Position 24 is a phosphotyrosine (Y24). K40 is subject to N6-succinyllysine. S49 is modified (phosphoserine). H58 is a binding site for O2. A heme b-binding site is contributed by H87. A Phosphoserine modification is found at S102. The residue at position 108 (T108) is a Phosphothreonine. Phosphoserine occurs at positions 124 and 131. Phosphothreonine is present on residues T134 and T137. S138 carries the phosphoserine modification.

Belongs to the globin family. In terms of assembly, heterotetramer of two alpha chains and two beta chains. As to expression, red blood cells.

In terms of biological role, involved in oxygen transport from the lung to the various peripheral tissues. Its function is as follows. Hemopressin acts as an antagonist peptide of the cannabinoid receptor CNR1. Hemopressin-binding efficiently blocks cannabinoid receptor CNR1 and subsequent signaling. This Mesocricetus auratus (Golden hamster) protein is Hemoglobin subunit alpha (HBA).